Reading from the N-terminus, the 302-residue chain is Succinate--CoA ligase [ADP-forming] subunit alpha (302 aa).

Residues 17–20 (TGST), Lys-43, and 96–98 (ITE) each bind CoA. Residue Tyr-159 coordinates substrate. The active-site Tele-phosphohistidine intermediate is His-247.

Belongs to the succinate/malate CoA ligase alpha subunit family. In terms of assembly, heterotetramer of two alpha and two beta subunits.

It catalyses the reaction succinate + ATP + CoA = succinyl-CoA + ADP + phosphate. The enzyme catalyses GTP + succinate + CoA = succinyl-CoA + GDP + phosphate. Its pathway is carbohydrate metabolism; tricarboxylic acid cycle; succinate from succinyl-CoA (ligase route): step 1/1. Its function is as follows. Succinyl-CoA synthetase functions in the citric acid cycle (TCA), coupling the hydrolysis of succinyl-CoA to the synthesis of either ATP or GTP and thus represents the only step of substrate-level phosphorylation in the TCA. The alpha subunit of the enzyme binds the substrates coenzyme A and phosphate, while succinate binding and nucleotide specificity is provided by the beta subunit. The chain is Succinate--CoA ligase [ADP-forming] subunit alpha from Staphylococcus aureus (strain MSSA476).